The primary structure comprises 274 residues: Urease accessory protein UreD (274 aa).

Belongs to the UreD family. In terms of assembly, ureD, UreF and UreG form a complex that acts as a GTP-hydrolysis-dependent molecular chaperone, activating the urease apoprotein by helping to assemble the nickel containing metallocenter of UreC. The UreE protein probably delivers the nickel.

It is found in the cytoplasm. Functionally, required for maturation of urease via the functional incorporation of the urease nickel metallocenter. The sequence is that of Urease accessory protein UreD from Thermosynechococcus vestitus (strain NIES-2133 / IAM M-273 / BP-1).